The sequence spans 933 residues: Protein translocase subunit SecA (933 aa).

Residues glutamine 90, 108–112, and aspartate 504 contribute to the ATP site; that span reads GEGKT. Residues 539–570 form a disordered region; that stretch reads GMGSNNRRPQGFGQDSKKKKWQPSADIFPTDL.

It belongs to the SecA family. Monomer and homodimer. Part of the essential Sec protein translocation apparatus which comprises SecA, SecYEG and auxiliary proteins SecDF. Other proteins may also be involved.

It localises to the cell inner membrane. The protein resides in the cellular thylakoid membrane. The protein localises to the cytoplasm. It carries out the reaction ATP + H2O + cellular proteinSide 1 = ADP + phosphate + cellular proteinSide 2.. Its function is as follows. Part of the Sec protein translocase complex. Interacts with the SecYEG preprotein conducting channel. Has a central role in coupling the hydrolysis of ATP to the transfer of proteins into and across the cell membrane, serving as an ATP-driven molecular motor driving the stepwise translocation of polypeptide chains across the membrane. Functionally, probably participates in protein translocation into and across both the cytoplasmic and thylakoid membranes in cyanobacterial cells. The polypeptide is Protein translocase subunit SecA (Crocosphaera subtropica (strain ATCC 51142 / BH68) (Cyanothece sp. (strain ATCC 51142))).